Here is a 591-residue protein sequence, read N- to C-terminus: Aspartate--tRNA(Asp/Asn) ligase (591 aa).

L-aspartate is bound at residue Glu-174. Positions Gln-198 to Lys-201 are aspartate. Residue Arg-220 coordinates L-aspartate. ATP is bound by residues Arg-220–Glu-222 and Gln-229. Residue His-450 coordinates L-aspartate. Glu-483 contacts ATP. An L-aspartate-binding site is contributed by Arg-490. Gly-535–Arg-538 lines the ATP pocket.

The protein belongs to the class-II aminoacyl-tRNA synthetase family. Type 1 subfamily. As to quaternary structure, homodimer.

The protein resides in the cytoplasm. The catalysed reaction is tRNA(Asx) + L-aspartate + ATP = L-aspartyl-tRNA(Asx) + AMP + diphosphate. Functionally, aspartyl-tRNA synthetase with relaxed tRNA specificity since it is able to aspartylate not only its cognate tRNA(Asp) but also tRNA(Asn). Reaction proceeds in two steps: L-aspartate is first activated by ATP to form Asp-AMP and then transferred to the acceptor end of tRNA(Asp/Asn). This chain is Aspartate--tRNA(Asp/Asn) ligase, found in Ectopseudomonas mendocina (strain ymp) (Pseudomonas mendocina).